Consider the following 1154-residue polypeptide: CRISPR-associated endoribonuclease Cas13a (1154 aa).

HEPN-like fold regions lie at residues 330–466 (TTSN…RFIN) and 923–1154 (FVHL…EMKK).

It belongs to the CRISPR-associated endoribonuclease Cas13a family. It depends on a divalent metal cation as a cofactor.

Target RNA acts as an activator for non-specific ssRNA degradation. Functionally, CRISPR (clustered regularly interspaced short palindromic repeat), is an adaptive immune system that provides protection against mobile genetic elements (viruses, transposable elements and conjugative plasmids). CRISPR clusters contain sequences complementary to antecedent mobile elements and target invading nucleic acids. Unlike many single-component effectors, this CRISPR-Cas system targets RNA. CRISPR clusters are transcribed from pre-CRISPR RNA (crRNA) and processed into crRNA by this protein. Cleaves linear target ssRNA in a pre-crRNA-dependent fashion, preferentially before U residues. Binding a viable target RNA target activates this protein for non-specific RNA degradation in vitro (called collateral RNA degradation), which is fairly sensitive as it requires picomolar levels of viable target RNA. The sequence is that of CRISPR-associated endoribonuclease Cas13a from Paludibacter propionicigenes (strain DSM 17365 / JCM 13257 / WB4).